The chain runs to 296 residues: uncharacterized protein (296 aa).

The HTH lysR-type domain occupies 1-60; the sequence is MDPKISYFQTFIVASKTKSFSKAAKRLGITQGTVSNHISALEKYFDAQLFLRTPEGVDLT. The H-T-H motif DNA-binding region spans 20–39; sequence FSKAAKRLGITQGTVSNHIS.

It belongs to the LysR transcriptional regulatory family.

This is an uncharacterized protein from Methanocaldococcus jannaschii (strain ATCC 43067 / DSM 2661 / JAL-1 / JCM 10045 / NBRC 100440) (Methanococcus jannaschii).